Reading from the N-terminus, the 55-residue chain is ATP synthase small subunit 6-A, mitochondrial (55 aa).

The N-terminal 11 residues, 1-11 (MRLFDPWPVFF), are a transit peptide targeting the mitochondrion. The helical transmembrane segment at 21–39 (FLTGFAVTGVLITKLTAGL) threads the bilayer.

The protein belongs to the ATPase 6 subunit family.

It is found in the mitochondrion inner membrane. Mitochondrial membrane ATP synthase (F(1)F(0) ATP synthase or Complex V) produces ATP from ADP in the presence of a proton gradient across the membrane which is generated by electron transport complexes of the respiratory chain. F-type ATPases consist of two structural domains, F(1) - containing the extramembraneous catalytic core and F(0) - containing the membrane proton channel, linked together by a central stalk and a peripheral stalk. During catalysis, ATP synthesis in the catalytic domain of F(1) is coupled via a rotary mechanism of the central stalk subunits to proton translocation. Part of the complex F(0) domain. Confers tolerance to several abiotic stresses (e.g. salt, mannitol, drought, oxidative and cold stresses), probably by providing additional energy needed for cell homeostasis. In Arabidopsis thaliana (Mouse-ear cress), this protein is ATP synthase small subunit 6-A, mitochondrial.